The following is a 226-amino-acid chain: Glutathione peroxidase 3 (226 aa).

The signal sequence occupies residues 1 to 24 (MARLLQASCLLSLLLAGFVPQSRG). The active site involves Sec73. A non-standard amino acid (selenocysteine) is located at residue Sec73.

Belongs to the glutathione peroxidase family. Homotetramer. Secreted in plasma.

Its subcellular location is the secreted. It catalyses the reaction 2 glutathione + H2O2 = glutathione disulfide + 2 H2O. It carries out the reaction tert-butyl hydroperoxide + 2 glutathione = tert-butanol + glutathione disulfide + H2O. Its function is as follows. Protects cells and enzymes from oxidative damage, by catalyzing the reduction of hydrogen peroxide, lipid peroxides and organic hydroperoxide, by glutathione. The sequence is that of Glutathione peroxidase 3 from Pongo pygmaeus (Bornean orangutan).